Consider the following 166-residue polypeptide: Small ribosomal subunit protein uS5 (166 aa).

Residues 11–74 (LQEKLIAVNR…EKARRNMINV (64 aa)) form the S5 DRBM domain.

It belongs to the universal ribosomal protein uS5 family. In terms of assembly, part of the 30S ribosomal subunit. Contacts proteins S4 and S8.

Its function is as follows. With S4 and S12 plays an important role in translational accuracy. In terms of biological role, located at the back of the 30S subunit body where it stabilizes the conformation of the head with respect to the body. The polypeptide is Small ribosomal subunit protein uS5 (Pasteurella multocida (strain Pm70)).